Reading from the N-terminus, the 213-residue chain is Uridine kinase (213 aa).

15–22 (GASASGKS) provides a ligand contact to ATP.

It belongs to the uridine kinase family.

The protein resides in the cytoplasm. The catalysed reaction is uridine + ATP = UMP + ADP + H(+). It catalyses the reaction cytidine + ATP = CMP + ADP + H(+). Its pathway is pyrimidine metabolism; CTP biosynthesis via salvage pathway; CTP from cytidine: step 1/3. The protein operates within pyrimidine metabolism; UMP biosynthesis via salvage pathway; UMP from uridine: step 1/1. The protein is Uridine kinase of Salmonella agona (strain SL483).